We begin with the raw amino-acid sequence, 80 residues long: Exodeoxyribonuclease 7 small subunit (80 aa).

This sequence belongs to the XseB family. In terms of assembly, heterooligomer composed of large and small subunits.

It localises to the cytoplasm. It catalyses the reaction Exonucleolytic cleavage in either 5'- to 3'- or 3'- to 5'-direction to yield nucleoside 5'-phosphates.. Bidirectionally degrades single-stranded DNA into large acid-insoluble oligonucleotides, which are then degraded further into small acid-soluble oligonucleotides. In Pseudomonas fluorescens (strain ATCC BAA-477 / NRRL B-23932 / Pf-5), this protein is Exodeoxyribonuclease 7 small subunit.